The following is a 298-amino-acid chain: Junctional adhesion molecule A (298 aa).

The first 28 residues, 1–28 (MGTEARAGRRQLLVFTSVVLSSLALGRG), serve as a signal peptide directing secretion. 2 Ig-like V-type domains span residues 29–126 (AVYT…VQLT) and 134–227 (PTVH…EAVR). Topologically, residues 29–237 (AVYTSEPDVR…MEAAELNVGG (209 aa)) are extracellular. 2 disulfides stabilise this stretch: Cys-49–Cys-108 and Cys-152–Cys-211. An N-linked (GlcNAc...) asparagine glycan is attached at Asn-184. The chain crosses the membrane as a helical span at residues 238–258 (IVAAVLVTLILLGFLILGIWF). Over 259–298 (AYRRGYFDRTKKGTSSKKVIYSQPAARSEGEFRQTSSFLV) the chain is Cytoplasmic. Residues Ser-280 and Ser-286 each carry the phosphoserine modification.

The protein belongs to the immunoglobulin superfamily. As to quaternary structure, interacts with the ninth PDZ domain of MPDZ. Interacts with the first PDZ domain of PARD3. The association between PARD3 and PARD6B probably disrupts this interaction. Interacts with ITGAL (via I-domain). Interacts with CD151. In terms of assembly, (Microbial infection) Interacts with calicivirus capsid protein. (Microbial infection) Interacts with the orthoreovirus sigma-1 capsid protein.

The protein resides in the cell junction. The protein localises to the tight junction. It is found in the cell membrane. Its function is as follows. Seems to play a role in epithelial tight junction formation. Appears early in primordial forms of cell junctions and recruits PARD3. The association of the PARD6-PARD3 complex may prevent the interaction of PARD3 with JAM1, thereby preventing tight junction assembly. Plays a role in regulating monocyte transmigration involved in integrity of epithelial barrier. Ligand for integrin alpha-L/beta-2 involved in memory T-cell and neutrophil transmigration. Involved in platelet activation. Functionally, (Microbial infection) Acts as a functional receptor for murine norovirus. (Microbial infection) In case of orthoreovirus infection, serves as receptor for the virus. This chain is Junctional adhesion molecule A (F11R), found in Felis catus (Cat).